Reading from the N-terminus, the 127-residue chain is Modulator protein MzrA (127 aa).

The Cytoplasmic segment spans residues 1-9 (MQLPRVTLR). Residues 10–32 (QMTWTTSAIVLLGITLLLWSAFR) form a helical membrane-spanning segment. The Periplasmic segment spans residues 33–127 (HQESTLAIRA…LLRDTSHRFG (95 aa)).

It belongs to the MzrA family. Interacts with EnvZ.

The protein resides in the cell inner membrane. In terms of biological role, modulates the activity of the EnvZ/OmpR two-component regulatory system, probably by directly modulating EnvZ enzymatic activity and increasing stability of phosphorylated OmpR. This is Modulator protein MzrA from Escherichia fergusonii (strain ATCC 35469 / DSM 13698 / CCUG 18766 / IAM 14443 / JCM 21226 / LMG 7866 / NBRC 102419 / NCTC 12128 / CDC 0568-73).